Here is a 663-residue protein sequence, read N- to C-terminus: UvrABC system protein B (663 aa).

The Helicase ATP-binding domain occupies 31 to 271 (DNIEGGEKAQ…EQSISKIQAE (241 aa)). An ATP-binding site is contributed by 44-51 (GATGTGKT). The short motif at 97-120 (YYDYYQPEAYVPSSDTYIEKDSSV) is the Beta-hairpin element. Residues 435–601 (QMDDLLGEIN…TIKKDIRDLI (167 aa)) form the Helicase C-terminal domain. The UVR domain occupies 627 to 662 (QEAIKQLQKNMQEAAELLDFELAAQLRDLILELKAM).

This sequence belongs to the UvrB family. As to quaternary structure, forms a heterotetramer with UvrA during the search for lesions. Interacts with UvrC in an incision complex.

It localises to the cytoplasm. Functionally, the UvrABC repair system catalyzes the recognition and processing of DNA lesions. A damage recognition complex composed of 2 UvrA and 2 UvrB subunits scans DNA for abnormalities. Upon binding of the UvrA(2)B(2) complex to a putative damaged site, the DNA wraps around one UvrB monomer. DNA wrap is dependent on ATP binding by UvrB and probably causes local melting of the DNA helix, facilitating insertion of UvrB beta-hairpin between the DNA strands. Then UvrB probes one DNA strand for the presence of a lesion. If a lesion is found the UvrA subunits dissociate and the UvrB-DNA preincision complex is formed. This complex is subsequently bound by UvrC and the second UvrB is released. If no lesion is found, the DNA wraps around the other UvrB subunit that will check the other stand for damage. This chain is UvrABC system protein B, found in Streptococcus equi subsp. equi (strain 4047).